The following is a 165-amino-acid chain: uncharacterized protein (165 aa).

Residues 20 to 40 traverse the membrane as a helical segment; the sequence is INLIASIVLWLLFVITVIGTF. Residue Asn51 is glycosylated (N-linked (GlcNAc...) asparagine; by host). A helical membrane pass occupies residues 97–117; that stretch reads VGIIVILIFMLMIIMNGFYQM.

The protein resides in the membrane. This is an uncharacterized protein from Acanthamoeba polyphaga (Amoeba).